The chain runs to 558 residues: Protein SET DOMAIN GROUP 41 (558 aa).

The SET domain maps to 115–249 (PSISVAIHHA…SGEEITVSYI (135 aa)).

Belongs to the class V-like SAM-binding methyltransferase superfamily.

The polypeptide is Protein SET DOMAIN GROUP 41 (SDG41) (Arabidopsis thaliana (Mouse-ear cress)).